The following is a 350-amino-acid chain: Bifunctional methylenetetrahydrofolate dehydrogenase/cyclohydrolase, mitochondrial (350 aa).

The transit peptide at 1 to 35 (MASVSLLSALAVRLLRPTHGCHPRLQPFHLAAVRN) directs the protein to the mitochondrion. The residue at position 50 (Lys-50) is an N6-acetyllysine; alternate. Lys-50 is covalently cross-linked (Glycyl lysine isopeptide (Lys-Gly) (interchain with G-Cter in SUMO2); alternate). Residues 84–88 (YVLNK) and 131–133 (VQL) contribute to the substrate site. Residues 200-202 (GRS) and Arg-233 each bind NAD(+). 309–313 (PGGVG) lines the substrate pocket.

Belongs to the tetrahydrofolate dehydrogenase/cyclohydrolase family. Homodimer. Mg(2+) is required as a cofactor.

It localises to the mitochondrion. It catalyses the reaction (6R)-5,10-methylene-5,6,7,8-tetrahydrofolate + NAD(+) = (6R)-5,10-methenyltetrahydrofolate + NADH. The catalysed reaction is (6R)-5,10-methenyltetrahydrofolate + H2O = (6R)-10-formyltetrahydrofolate + H(+). Although its dehydrogenase activity is NAD-specific, it can also utilize NADP at a reduced efficiency. This is Bifunctional methylenetetrahydrofolate dehydrogenase/cyclohydrolase, mitochondrial (Mthfd2) from Mus musculus (Mouse).